An 87-amino-acid polypeptide reads, in one-letter code: DNA-directed RNA polymerase subunit omega (87 aa).

The protein belongs to the RNA polymerase subunit omega family. The RNAP catalytic core consists of 2 alpha, 1 beta, 1 beta' and 1 omega subunit. When a sigma factor is associated with the core the holoenzyme is formed, which can initiate transcription.

The enzyme catalyses RNA(n) + a ribonucleoside 5'-triphosphate = RNA(n+1) + diphosphate. Functionally, promotes RNA polymerase assembly. Latches the N- and C-terminal regions of the beta' subunit thereby facilitating its interaction with the beta and alpha subunits. The chain is DNA-directed RNA polymerase subunit omega from Pseudomonas savastanoi pv. phaseolicola (strain 1448A / Race 6) (Pseudomonas syringae pv. phaseolicola (strain 1448A / Race 6)).